The sequence spans 351 residues: Protein-glutamate methylesterase/protein-glutamine glutaminase 2 (351 aa).

The region spanning 4–121 (KVLVVDDSAL…PQDFNEYQDL (118 aa)) is the Response regulatory domain. The residue at position 55 (Asp-55) is a 4-aspartylphosphate. Residues 156 to 348 (RVINTQLVAI…DKMLNYLASL (193 aa)) form the CheB-type methylesterase domain. Residues Ser-168, His-194, and Asp-290 contribute to the active site.

It belongs to the CheB family. Phosphorylated by CheA. Phosphorylation of the N-terminal regulatory domain activates the methylesterase activity.

Its subcellular location is the cytoplasm. It catalyses the reaction [protein]-L-glutamate 5-O-methyl ester + H2O = L-glutamyl-[protein] + methanol + H(+). The enzyme catalyses L-glutaminyl-[protein] + H2O = L-glutamyl-[protein] + NH4(+). Its function is as follows. Involved in chemotaxis. Part of a chemotaxis signal transduction system that modulates chemotaxis in response to various stimuli. Catalyzes the demethylation of specific methylglutamate residues introduced into the chemoreceptors (methyl-accepting chemotaxis proteins or MCP) by CheR. Also mediates the irreversible deamidation of specific glutamine residues to glutamic acid. The protein is Protein-glutamate methylesterase/protein-glutamine glutaminase 2 of Shewanella sp. (strain MR-4).